Consider the following 721-residue polypeptide: Polyribonucleotide nucleotidyltransferase (721 aa).

Positions 486 and 492 each coordinate Mg(2+). The KH domain maps to 553 to 612; sequence PKIVQLQIDIDKISLVIGSTGKTVKAITDEFEVKVQIEQNGKIILFGDDDFKMQKAKERI. In terms of domain architecture, S1 motif spans 622-716; it reads GEIYEGIVKK…KFGKIDLEVV (95 aa).

It belongs to the polyribonucleotide nucleotidyltransferase family. The cofactor is Mg(2+).

Its subcellular location is the cytoplasm. The enzyme catalyses RNA(n+1) + phosphate = RNA(n) + a ribonucleoside 5'-diphosphate. Functionally, involved in mRNA degradation. Catalyzes the phosphorolysis of single-stranded polyribonucleotides processively in the 3'- to 5'-direction. The sequence is that of Polyribonucleotide nucleotidyltransferase from Borrelia garinii subsp. bavariensis (strain ATCC BAA-2496 / DSM 23469 / PBi) (Borreliella bavariensis).